The primary structure comprises 401 residues: Shugoshin (401 aa).

Residues 3–49 (SKVEQQYKLLNAELMDQVQKQRLEIGEYRKRVISLEREIMDIREEHV) are a coiled coil. Residues 82 to 197 (EPAPAAQINR…VEETQTEQNE (116 aa)) form a disordered region. Over residues 98-108 (SSREICKDMRR) the composition is skewed to basic and acidic residues. A compositionally biased stretch (low complexity) spans 114-137 (RTTRPISPRRSSSVTSTVSSTSRR). A phosphoserine; by AurB mark is found at Ser124, Ser125, and Ser126. Residues 171 to 183 (VFDEDDSDDDFDE) show a composition bias toward acidic residues. Phosphothreonine; by PLK1 is present on Thr331. The interval 338 to 401 (EEMPSIRTRS…GSKGKAKAKK (64 aa)) is disordered. Polar residues predominate over residues 348–377 (RTAANKKSENTDMSSSFCNNSARPSRSCRP). The span at 387-401 (NKLRNGSKGKAKAKK) shows a compositional bias: basic residues.

It belongs to the shugoshin family. As to quaternary structure, homodimer. Interacts with Incenp. Post-translationally, phosphorylation by polo-like kinase (PLK) on Thr-331 antagonizes cohesive function. Phosphorylation on Thr-331 at the metaphase anaphase transition leads to its dissociation from centromeres. In contrast, phosphorylation by aurB/ial on either Ser-124, Ser-125 or Ser-126 is required for association with centromeres.

Its subcellular location is the chromosome. It is found in the centromere. Its function is as follows. Plays a central role in chromosome cohesion during meiosis and mitosis by preventing premature dissociation of cohesin complex from centromeres after prophase, when most of cohesin complex dissociates from chromosomes arms. May act by protecting or Rad21 from cleavage by Sse/separase. Required during meiosis in both males and females. This Drosophila melanogaster (Fruit fly) protein is Shugoshin (mei-S332).